We begin with the raw amino-acid sequence, 161 residues long: Anaerobic nitrite reductase Glb1-2 (161 aa).

The Globin domain occupies 9 to 158 (AFTEEQEALV…LASAIIAEMK (150 aa)). Residues 42–46 (EIAPP) carry the Homodimerization motif. Positions 52, 66, 70, 100, 104, and 105 each coordinate heme b. The Homodimerization signature appears at 112 to 124 (PEHFEVTKQALLD).

It belongs to the plant globin family. Homodimer. The cofactor is heme b. Mainly expressed in root nodules and leaves, and, to a lower extent, in roots, stems, flowers and fruits. Accumulates in mature root nodules.

It catalyses the reaction Fe(III)-heme b-[protein] + nitric oxide + H2O = Fe(II)-heme b-[protein] + nitrite + 2 H(+). Functionally, phytoglobin that reduces nitrite to nitric oxide (NO) under anoxic conditions (e.g. during flooding or in waterlogged soil) and upon root nodulation. Required for general plant development and during nodulation, especially for the onset of symbiosis. Monitors nitric oxide (NO) levels during early phase of the nitrogen-fixing symbiosis and buffers oxygen in functioning nodules. Necessary for the production of pods. May not function as an oxygen storage or transport protein. Has an unusually high affinity for O(2) through a hexacoordinate heme iron because of a very low dissociation constant. The chain is Anaerobic nitrite reductase Glb1-2 from Lotus japonicus (Lotus corniculatus var. japonicus).